The following is a 360-amino-acid chain: UPF0324 membrane protein plu2856 (360 aa).

9 helical membrane passes run 20–42 (LIPGLILAAILTAISIYAGNIPW), 47–69 (GLGTLTLAILAGIIVGNTVYPLL), 104–126 (VGITGLLIDAAMLSSTFFIAIWL), 136–155 (QTVILIGAGSSICGAAAIMA), 167–189 (VAVAVSTIVIFGTIAIFIYPWFY), 239–256 (MIRVMMLAPFLLLLSRYI), 277–299 (WFAVIFIAIAGFNSFNLLPAAIV), 304–326 (NIDTIMLTMAMGALGLTTHVSAI), and 333–355 (PILLALILFVWLMAGGLLINLGI).

This sequence belongs to the UPF0324 family.

The protein localises to the cell membrane. The protein is UPF0324 membrane protein plu2856 of Photorhabdus laumondii subsp. laumondii (strain DSM 15139 / CIP 105565 / TT01) (Photorhabdus luminescens subsp. laumondii).